A 593-amino-acid polypeptide reads, in one-letter code: High affinity cGMP-specific 3',5'-cyclic phosphodiesterase 9A (593 aa).

The segment at 87 to 142 (SAGVEDKRTTSRGQSAERPLRDRRVVGLEQPRREGAFESGQVEPRPREPQGCCQEG) is disordered. The span at 104–122 (RPLRDRRVVGLEQPRREGA) shows a compositional bias: basic and acidic residues. Residues 236-557 (PRRDVPTYPK…DRYEELKRID (322 aa)) enclose the PDEase domain. The active-site Proton donor is His312. Residue 312-316 (HNFRH) coordinates 3',5'-cyclic GMP. Positions 316, 352, and 353 each coordinate Zn(2+). A 3',5'-cyclic GMP-binding site is contributed by Asp353. Asp353 is a Mg(2+) binding site. Ser379 bears the Phosphoserine mark. 3',5'-cyclic GMP is bound by residues Asp462, Tyr484, and 512 to 513 (AQ). Asp462 serves as a coordination point for Zn(2+). The interval 564–593 (QKKTDSLTSGATEKSRERSRDVKNSEGDCA) is disordered. Positions 576 to 593 (EKSRERSRDVKNSEGDCA) are enriched in basic and acidic residues.

This sequence belongs to the cyclic nucleotide phosphodiesterase family. PDE9 subfamily. In terms of assembly, homodimer. Requires Zn(2+) as cofactor. It depends on Mg(2+) as a cofactor.

The protein localises to the cell projection. It is found in the ruffle membrane. Its subcellular location is the cytoplasm. It localises to the perinuclear region. The protein resides in the golgi apparatus. The protein localises to the endoplasmic reticulum. It is found in the cell membrane. Its subcellular location is the sarcolemma. It catalyses the reaction 3',5'-cyclic GMP + H2O = GMP + H(+). It functions in the pathway purine metabolism; 3',5'-cyclic GMP degradation; GMP from 3',5'-cyclic GMP: step 1/1. Specifically inhibited by a compound named 3r ((R)-2-((1-cyclopentyl-4-hydroxy-1H-pyrazolo[3,4-d]pyrimidin-6- yl)amino)-N-(4-methoxyphenyl)propanamide); the inhibitor forms a hydrogen bond with Tyr-484, Ala-512 and Gln-513. In terms of biological role, specifically hydrolyzes the second messenger cGMP, which is a key regulator of many important physiological processes. Highly specific: compared to other members of the cyclic nucleotide phosphodiesterase family, has the highest affinity and selectivity for cGMP. Specifically regulates natriuretic-peptide-dependent cGMP signaling in heart, acting as a regulator of cardiac hypertrophy in myocytes and muscle. Does not regulate nitric oxide-dependent cGMP in heart. Additional experiments are required to confirm whether its ability to hydrolyze natriuretic-peptide-dependent cGMP is specific to heart or is a general feature of the protein. In brain, involved in cognitive function, such as learning and long-term memory. The sequence is that of High affinity cGMP-specific 3',5'-cyclic phosphodiesterase 9A (PDE9A) from Pan troglodytes (Chimpanzee).